The primary structure comprises 185 residues: Alcohol dehydrogenase 1 (185 aa).

NAD(+) contacts are provided by residues 10–15, Asp-34, Lys-39, 103–105, and Arg-180; these read GLGGVG and VGV.

It belongs to the zinc-containing alcohol dehydrogenase family. Class-I subfamily. In terms of assembly, homodimer. Zn(2+) is required as a cofactor.

Its subcellular location is the cytoplasm. It catalyses the reaction a primary alcohol + NAD(+) = an aldehyde + NADH + H(+). The catalysed reaction is a secondary alcohol + NAD(+) = a ketone + NADH + H(+). The polypeptide is Alcohol dehydrogenase 1 (ADH1) (Anas platyrhynchos (Mallard)).